The sequence spans 675 residues: Cysteine-rich receptor-like protein kinase 25 (675 aa).

The N-terminal stretch at 1–25 (MSSCFKSSVSLFSVFLFMILKTVTS) is a signal peptide. The Extracellular portion of the chain corresponds to 26 to 281 (DPTYLYHICP…IPSEKGKGKN (256 aa)). Gnk2-homologous domains are found at residues 28–134 (TYLY…NQSI) and 140–247 (IRPG…LYPF). 10 N-linked (GlcNAc...) asparagine glycosylation sites follow: Asn36, Asn43, Asn77, Asn106, Asn131, Asn151, Asn161, Asn188, Asn249, and Asn281. Residues 282 to 302 (LTVIVTAIAVPVSVCVLLLGA) form a helical membrane-spanning segment. Over 303–675 (MCWLLARRRN…DSSITIVYPR (373 aa)) the chain is Cytoplasmic. One can recognise a Protein kinase domain in the interval 347 to 622 (FSESNKLGHG…DILVMMNSFT (276 aa)). ATP contacts are provided by residues 353-361 (LGHGGFGEV) and Lys375. Tyr420 is subject to Phosphotyrosine. Asp472 functions as the Proton acceptor in the catalytic mechanism. Ser476 carries the post-translational modification Phosphoserine. At Thr512 the chain carries Phosphothreonine. Tyr520 bears the Phosphotyrosine mark. Positions 638-661 (MKDSRDPRSGGSASDHSATSKSLP) are disordered. Positions 648–661 (GSASDHSATSKSLP) are enriched in polar residues.

It belongs to the protein kinase superfamily. Ser/Thr protein kinase family. CRK subfamily.

It localises to the membrane. The enzyme catalyses L-seryl-[protein] + ATP = O-phospho-L-seryl-[protein] + ADP + H(+). It catalyses the reaction L-threonyl-[protein] + ATP = O-phospho-L-threonyl-[protein] + ADP + H(+). In Arabidopsis thaliana (Mouse-ear cress), this protein is Cysteine-rich receptor-like protein kinase 25 (CRK25).